Consider the following 128-residue polypeptide: Large ribosomal subunit protein uL22 (128 aa).

Residues 1–20 form a disordered region; the sequence is MANGHRSQIKRERNAVKDTR. The span at 9–20 shows a compositional bias: basic and acidic residues; that stretch reads IKRERNAVKDTR.

The protein belongs to the universal ribosomal protein uL22 family. In terms of assembly, part of the 50S ribosomal subunit.

This protein binds specifically to 23S rRNA; its binding is stimulated by other ribosomal proteins, e.g. L4, L17, and L20. It is important during the early stages of 50S assembly. It makes multiple contacts with different domains of the 23S rRNA in the assembled 50S subunit and ribosome. Functionally, the globular domain of the protein is located near the polypeptide exit tunnel on the outside of the subunit, while an extended beta-hairpin is found that lines the wall of the exit tunnel in the center of the 70S ribosome. This Lachnospira eligens (strain ATCC 27750 / DSM 3376 / VPI C15-48 / C15-B4) (Eubacterium eligens) protein is Large ribosomal subunit protein uL22.